A 296-amino-acid chain; its full sequence is Elongation factor Ts (296 aa).

The tract at residues 79-82 is involved in Mg(2+) ion dislocation from EF-Tu; that stretch reads TDFV.

It belongs to the EF-Ts family.

The protein localises to the cytoplasm. In terms of biological role, associates with the EF-Tu.GDP complex and induces the exchange of GDP to GTP. It remains bound to the aminoacyl-tRNA.EF-Tu.GTP complex up to the GTP hydrolysis stage on the ribosome. The sequence is that of Elongation factor Ts from Acholeplasma laidlawii (strain PG-8A).